The sequence spans 459 residues: Vasoactive intestinal polypeptide receptor 1 (459 aa).

The signal sequence occupies residues 1–30 (MRPPSLPPARWLCVLAGALACALGPAGSRA). The Extracellular portion of the chain corresponds to 31 to 142 (ASPHQECEYL…EQQQTEFYDA (112 aa)). 5 disulfides stabilise this stretch: C37-C209, C50-C72, C63-C105, C86-C122, and C216-C286. 4 N-linked (GlcNAc...) asparagine glycosylation sites follow: N58, N69, N100, and N104. Residues 143 to 167 (VKTGYTIGYSLSLASLLVAMAILSL) form a helical membrane-spanning segment. The Cytoplasmic segment spans residues 168-175 (FRKLHCTR). A helical transmembrane segment spans residues 176–197 (NYIHMHLFMSFILRATAVFIKD). Over 198 to 217 (MALFNNGETDHCSEASVSCK) the chain is Extracellular. A helical membrane pass occupies residues 218–242 (AAVVFFQYCVMANFFWLLVEGLYLH). Residues 243 to 255 (TLLAVSFFSERKY) are Cytoplasmic-facing. A helical transmembrane segment spans residues 256 to 277 (FWGYILIGWGVPSVFIMIWTIV). The Extracellular segment spans residues 278–293 (RIHFEDFGCWDTIINS). N292 carries an N-linked (GlcNAc...) asparagine glycan. A helical transmembrane segment spans residues 294-318 (SLWWIIKGPILISILVNFILFICII). The Cytoplasmic segment spans residues 319-340 (RILVQKLRPPDIGKNDSSPYSR). Residues 341–361 (LAKSTLLLIPLFGVHYVMFAF) form a helical membrane-spanning segment. Topologically, residues 362–369 (FPDNFKAQ) are extracellular. Residues 370-393 (VKMVFELVVGSFQGFVVAILYCFL) traverse the membrane as a helical segment. At 394–459 (NGEVQAELRR…SSFQAEVSLV (66 aa)) the chain is on the cytoplasmic side.

The protein belongs to the G-protein coupled receptor 2 family. Interacts with ADCYAP1/PACAP; activated by both PACAP27 and PACAP38 neuropeptides. Interacts with VIP; the interaction results in VIPR1 activation.

It is found in the cell membrane. In terms of biological role, g protein-coupled receptor activated by the neuropeptides vasoactive intestinal peptide (VIP) and pituitary adenylate cyclase-activating polypeptide (ADCYAP1/PACAP). Binds VIP and both PACAP27 and PACAP38 bioactive peptides with the following order of ligand affinity VIP = PACAP27 &gt; PACAP38. Ligand binding causes a conformation change that triggers signaling via guanine nucleotide-binding proteins (G proteins) and modulates the activity of downstream effectors. Activates cAMP-dependent pathway. The protein is Vasoactive intestinal polypeptide receptor 1 of Mus musculus (Mouse).